The following is a 433-amino-acid chain: 23S rRNA (uracil(1939)-C(5))-methyltransferase RlmD (433 aa).

Residues 1 to 53 (MPVAVIESLDHEGRGVAHVDGKVVFVEGALAGEQVEYTVYRQRPSYDLAEATR) form the TRAM domain. Positions 66, 72, 75, and 154 each coordinate [4Fe-4S] cluster. Residues Q263, F292, N297, E313, N341, and D362 each contribute to the S-adenosyl-L-methionine site. C389 functions as the Nucleophile in the catalytic mechanism.

Belongs to the class I-like SAM-binding methyltransferase superfamily. RNA M5U methyltransferase family. RlmD subfamily.

The catalysed reaction is uridine(1939) in 23S rRNA + S-adenosyl-L-methionine = 5-methyluridine(1939) in 23S rRNA + S-adenosyl-L-homocysteine + H(+). Its function is as follows. Catalyzes the formation of 5-methyl-uridine at position 1939 (m5U1939) in 23S rRNA. The protein is 23S rRNA (uracil(1939)-C(5))-methyltransferase RlmD of Aromatoleum aromaticum (strain DSM 19018 / LMG 30748 / EbN1) (Azoarcus sp. (strain EbN1)).